The following is a 190-amino-acid chain: RNA-binding protein OPG065 (190 aa).

The region spanning 5 to 70 (YIDERSNAEI…DIPPRWFMTT (66 aa)) is the Z-binding domain. The DRBM domain occupies 117–184 (NPVTVINEYC…AKLAVDKLLG (68 aa)).

The protein belongs to the orthopoxvirus OPG065 family. Interacts with host G1P2/ISG15. Interacts with host EIF2AK2/PKR. Interacts with host ZBP1.

RNA-binding protein that plays a role in the inhibition of multiple cellular antiviral responses activated by double-stranded RNA (dsRNA), such as inhibition of PKR activation, necroptosis, and IFN-mediated antiviral activities. Recognizes and binds Z-RNA structures via its Z-binding domain and dsRNA via its DRBM domain: RNA-binding activity is required to escape host ZBP1-dependent necroptosis. Mechanistically, the Z-binding domain binds Z-RNAs that are produced during vaccinia virus infection, thereby competing with Z-RNA detection by host ZBP1, suppressing ZBP1-dependent necroptosis. Acts as a key inhibitor of the interferon response by blocking the phosphorylation and subsequent activation of IRF3 and IRF7 kinases that are required for interferon-alpha gene expression. Inhibits NF-kappa-B activation and the ubiquitin-like protein ISG15, which is an early antiviral protein. The binding with host ISG15 subsequently blocks host ISGylation. This Vaccinia virus (strain Western Reserve) (VACV) protein is RNA-binding protein OPG065 (OPG065).